Reading from the N-terminus, the 86-residue chain is Anti-adapter protein IraP (86 aa).

Residues 1 to 36 (MKNLIAELLLKLAQKEEESKELCAQVEALEIIVTAM) adopt a coiled-coil conformation.

The protein belongs to the IraP family. Interacts with RssB.

The protein resides in the cytoplasm. Inhibits RpoS proteolysis by regulating RssB activity, thereby increasing the stability of the sigma stress factor RpoS especially during phosphate starvation, but also in stationary phase and during nitrogen starvation. Its effect on RpoS stability is due to its interaction with RssB, which probably blocks the interaction of RssB with RpoS, and the consequent delivery of the RssB-RpoS complex to the ClpXP protein degradation pathway. The sequence is that of Anti-adapter protein IraP from Shigella boydii serotype 4 (strain Sb227).